The sequence spans 186 residues: Ion-translocating oxidoreductase complex subunit B (186 aa).

The interval 1 to 23 (MLTPILALTALALIAGALLGFAA) is hydrophobic. Positions 29-88 (EGNPIADQVDAVLPQTQCGQCGFGGCRPYAEAIAAGEAEINRCPPGGQDTVQTLADLLGV) constitute a 4Fe-4S domain. [4Fe-4S] cluster-binding residues include C46, C49, C54, C71, C114, C117, C120, C124, C144, C147, C150, and C154. 2 consecutive 4Fe-4S ferredoxin-type domains span residues 105–134 (QVAW…GAAK) and 135–164 (QMHT…MVPV).

The protein belongs to the 4Fe4S bacterial-type ferredoxin family. RnfB subfamily. In terms of assembly, the complex is composed of six subunits: RnfA, RnfB, RnfC, RnfD, RnfE and RnfG. [4Fe-4S] cluster serves as cofactor.

The protein localises to the cell inner membrane. Part of a membrane-bound complex that couples electron transfer with translocation of ions across the membrane. The chain is Ion-translocating oxidoreductase complex subunit B from Alkalilimnicola ehrlichii (strain ATCC BAA-1101 / DSM 17681 / MLHE-1).